We begin with the raw amino-acid sequence, 116 residues long: Large ribosomal subunit protein bL17 (116 aa).

Belongs to the bacterial ribosomal protein bL17 family. Part of the 50S ribosomal subunit. Contacts protein L32.

This chain is Large ribosomal subunit protein bL17, found in Helicobacter pylori (strain J99 / ATCC 700824) (Campylobacter pylori J99).